A 462-amino-acid polypeptide reads, in one-letter code: 3-ketoacyl-CoA thiolase 2, peroxisomal (462 aa).

The N-terminal 34 residues, 1–34, are a transit peptide targeting the peroxisome; sequence MEKAIERQRVLLEHLRPSSSSSHNYEASLSASAC. Cys138 serves as the catalytic Acyl-thioester intermediate. A disulfide bond links Cys138 and Cys192. Catalysis depends on proton acceptor residues His393 and Cys425.

The protein belongs to the thiolase-like superfamily. Thiolase family. As to quaternary structure, forms homodimers. Accumulates in etiolated cotyledons and in seedlings, also present in roots, flowers and siliques (at protein level). High levels in wounded leaves.

It is found in the peroxisome. It localises to the glyoxysome. The enzyme catalyses an acyl-CoA + acetyl-CoA = a 3-oxoacyl-CoA + CoA. The protein operates within lipid metabolism; fatty acid metabolism. Involved in long chain fatty-acid beta-oxidation prior to gluconeogenesis during germination and subsequent seedling growth. Confers sensitivity to 2,4-dichlorophenoxybutiric acid (2,4-DB). Required for local and systemic induction of jasmonic acid (JA) biosynthesis after wounding. Seems to be involved in JA biosynthesis during senescence. May be involved in the positive regulation of abscisic acid-activated signaling pathway. The chain is 3-ketoacyl-CoA thiolase 2, peroxisomal (PED1) from Arabidopsis thaliana (Mouse-ear cress).